The chain runs to 430 residues: Histidine--tRNA ligase (430 aa).

The protein belongs to the class-II aminoacyl-tRNA synthetase family. In terms of assembly, homodimer.

It localises to the cytoplasm. The catalysed reaction is tRNA(His) + L-histidine + ATP = L-histidyl-tRNA(His) + AMP + diphosphate + H(+). In Chlamydia abortus (strain DSM 27085 / S26/3) (Chlamydophila abortus), this protein is Histidine--tRNA ligase.